The sequence spans 268 residues: Hydroxypyruvate/pyruvate aldolase (268 aa).

The active-site Proton acceptor is the H48. 2 residues coordinate a divalent metal cation: E152 and D178.

The protein belongs to the HpcH/HpaI aldolase family. Mn(2+) serves as cofactor. It depends on Mg(2+) as a cofactor. The cofactor is Co(2+).

It carries out the reaction D-glyceraldehyde + 3-hydroxypyruvate = (3R,4S,5R)-3,4,5,6-tetrahydroxy-2-oxohexanoate. The enzyme catalyses D-glyceraldehyde + 3-hydroxypyruvate = 2-dehydro-D-gluconate. The catalysed reaction is D-glyceraldehyde + 3-hydroxypyruvate = 2-dehydro-D-galactonate. It catalyses the reaction D-glyceraldehyde + pyruvate = 2-dehydro-3-deoxy-L-galactonate. It carries out the reaction 2-dehydro-3-deoxy-D-gluconate = D-glyceraldehyde + pyruvate. Its function is as follows. Aldolase which can catalyze in vitro the aldolisation reaction between hydroxypyruvate (HPA) or pyruvate (PA) and D-glyceraldehyde (D-GA). The condensation of hydroxypyruvate and D-glyceraldehyde produces (3R,4S,5R)-3,4,5,6-tetrahydroxy-2-oxohexanoate as the major product, 2-dehydro-D-gluconate and 2-dehydro-D-galactonate. The condensation of pyruvate and D-glyceraldehyde produces 2-dehydro-3-deoxy-L-galactonate as the major product and 2-dehydro-3-deoxy-D-gluconate. Also catalyzes the retro-aldol type decarboxylation of oxaloacetate, a general property of known pyruvate aldolases. The polypeptide is Hydroxypyruvate/pyruvate aldolase (Pseudomonas aeruginosa).